A 249-amino-acid polypeptide reads, in one-letter code: Putative NAD(+)--arginine ADP-ribosyltransferase Vis (249 aa).

An N-terminal signal peptide occupies residues 1 to 18; that stretch reads MNTRFLLLLCCLSFTTFS. Positions 31 to 223 constitute a TR mART core domain; the sequence is EEEVTQLAED…IGVETVKASA (193 aa). Residues 68 to 80, 117 to 120, and Glu-137 each bind NAD(+); these read SISGYQTANDYLR and RGTW. Arg-117 is an active-site residue. Residues Ser-142 and Glu-191 contribute to the active site. An NAD(+)-binding site is contributed by Glu-191.

Belongs to the Arg-specific ADP-ribosyltransferase family.

The protein resides in the secreted. It carries out the reaction L-arginyl-[protein] + NAD(+) = N(omega)-(ADP-D-ribosyl)-L-arginyl-[protein] + nicotinamide + H(+). In terms of biological role, a probable mono(ADP-ribosyl)transferase, it may ADP-ribosylate Arg in target protein(s). Upon expression in yeast cells causes cell death. This Vibrio splendidus (strain 12B01) protein is Putative NAD(+)--arginine ADP-ribosyltransferase Vis.